The primary structure comprises 222 residues: MCPPRGLLLVTILVLLSHLDHLTWARSLPTASPSPGIFQCLNHSQNLLRAVSNTLQKARQTLDYIPCTSEEIDHEDITKDKTSTVEACLPLELTMNESCLASREISLITNGSCLASGKASFMTVLCLSSIYEDLKMYQMEFKAMNAKLLMDPKRQIFLDQNMLTAIDELLQALNFNSVTVPQKSSLEEPDFYKTKIKLCILLHAFRIRAVTIDRMMSYLNSS.

Positions 1 to 25 are cleaved as a signal peptide; the sequence is MCPPRGLLLVTILVLLSHLDHLTWA. 3 cysteine pairs are disulfide-bonded: C40–C113, C67–C199, and C88–C126. Residues N42, N96, and N110 are each glycosylated (N-linked (GlcNAc...) asparagine).

The protein belongs to the IL-6 superfamily. Heterodimer with IL12B; disulfide-linked. This heterodimer is known as interleukin IL-12. Heterodimer with EBI3/IL27B; not disulfide-linked. This heterodimer is known as interleukin IL-35. Interacts with NBR1; this interaction promotes IL-12 secretion.

It localises to the secreted. Functionally, heterodimerizes with IL12B to form the IL-12 cytokine or with EBI3/IL27B to form the IL-35 cytokine. IL-12 is primarily produced by professional antigen-presenting cells (APCs) such as B-cells and dendritic cells (DCs) as well as macrophages and granulocytes and regulates T-cell and natural killer-cell responses, induces the production of interferon-gamma (IFN-gamma), favors the differentiation of T-helper 1 (Th1) cells and is an important link between innate resistance and adaptive immunity. Mechanistically, exerts its biological effects through a receptor composed of IL12R1 and IL12R2 subunits. Binding to the receptor results in the rapid tyrosine phosphorylation of a number of cellular substrates including the JAK family kinases TYK2 and JAK2. In turn, recruited STAT4 gets phosphorylated and translocates to the nucleus where it regulates cytokine/growth factor responsive genes. As part of IL-35, plays essential roles in maintaining the immune homeostasis of the liver microenvironment and also functions as an immune-suppressive cytokine. Mediates biological events through unconventional receptors composed of IL12RB2 and gp130/IL6ST heterodimers or homodimers. Signaling requires the transcription factors STAT1 and STAT4, which form a unique heterodimer that binds to distinct DNA sites. The polypeptide is Interleukin-12 subunit alpha (IL12A) (Canis lupus familiaris (Dog)).